Reading from the N-terminus, the 282-residue chain is Transformer-2 protein homolog alpha (282 aa).

A disordered region spans residues 1-118 (MSDVEENNFE…TGSRANPDPN (118 aa)). Residue Ser-2 is modified to N-acetylserine. 2 positions are modified to phosphoserine: Ser-2 and Ser-14. Thr-24 is modified (phosphothreonine). Over residues 51–84 (RSRSKSRSRSRRHSHRRYTRSRSHSHSHRRRSRS) the composition is skewed to basic residues. 3 positions are modified to phosphoserine: Ser-82, Ser-84, and Ser-86. A Phosphothreonine modification is found at Thr-88. A compositionally biased stretch (basic residues) spans 92–110 (RRRRSRSHSPMSNRRRHTG). Phosphoserine occurs at positions 96 and 98. The RRM domain occupies 119–197 (TCLGVFGLSL…RRIRVDYSIT (79 aa)). Lys-198 is covalently cross-linked (Glycyl lysine isopeptide (Lys-Gly) (interchain with G-Cter in SUMO2)). Positions 198–225 (KRAHTPTPGIYMGRPTHSGGGGGGGGGG) are linker. Disordered stretches follow at residues 201 to 245 (HTPT…YDRG) and 260 to 282 (SPSP…PRRY). Residues Thr-202 and Thr-204 each carry the phosphothreonine modification. The segment covering 215-230 (SGGGGGGGGGGGGGGG) has biased composition (gly residues). Arg-232 carries the omega-N-methylarginine modification. A compositionally biased stretch (basic and acidic residues) spans 232-245 (RRRDSYYDRGYDRG). Ser-236 carries the post-translational modification Phosphoserine. The span at 268 to 282 (YRSRSRSRSYSPRRY) shows a compositional bias: basic residues.

This sequence belongs to the splicing factor SR family. As to quaternary structure, binds to A3 enhancer proteins SRp75, SRp55, SRp40 and SRp30. Interacts with ILDR1 (via C-terminus) and ILDR2. In terms of processing, phosphorylated in the RS domains.

The protein resides in the nucleus. Functionally, sequence-specific RNA-binding protein which participates in the control of pre-mRNA splicing. The sequence is that of Transformer-2 protein homolog alpha from Homo sapiens (Human).